Reading from the N-terminus, the 286-residue chain is DegV domain-containing protein SPs1668 (286 aa).

One can recognise a DegV domain in the interval 3-282 (FTIMTDSTAD…PNTLAVFVIG (280 aa)). Threonine 62 and serine 94 together coordinate hexadecanoate.

In terms of biological role, may bind long-chain fatty acids, such as palmitate, and may play a role in lipid transport or fatty acid metabolism. This is DegV domain-containing protein SPs1668 from Streptococcus pyogenes serotype M3 (strain SSI-1).